Here is a 2439-residue protein sequence, read N- to C-terminus: Centrosomal protein of 290 kDa (2439 aa).

Coiled-coil stretches lie at residues alanine 75–glutamate 913 and asparagine 1271–threonine 1576. Disordered stretches follow at residues glutamate 1802–alanine 1824, glutamate 1867–lysine 1890, and glutamate 2017–glutamate 2048. Positions serine 2039 to glutamate 2048 are enriched in basic and acidic residues. Positions glutamine 2046–aspartate 2394 form a coiled coil.

In terms of assembly, part of the tectonic-like complex (also named B9 complex).

It localises to the cytoplasm. It is found in the cytoskeleton. The protein resides in the microtubule organizing center. Its subcellular location is the centrosome. The protein localises to the centriolar satellite. It localises to the nucleus. It is found in the cilium basal body. Involved in early and late steps in cilia formation. May play a role in early ciliogenesis in the disappearance of centriolar satellites and in the transition of primary ciliar vesicles (PCVs) to capped ciliary vesicles (CCVs). In the ciliary transition zone is part of the tectonic-like complex which is required for tissue-specific ciliogenesis and may regulate ciliary membrane composition. Involved in regulation of the BBSome complex integrity and in ciliary targeting of selected BBSome cargos. Required for the correct localization of ciliary and phototransduction proteins in retinal photoreceptor cells; may play a role in ciliary transport processes. Involved in development of the nervous system and kidney. The polypeptide is Centrosomal protein of 290 kDa (cep290) (Danio rerio (Zebrafish)).